We begin with the raw amino-acid sequence, 91 residues long: Small ribosomal subunit protein uS19 (91 aa).

It belongs to the universal ribosomal protein uS19 family.

Protein S19 forms a complex with S13 that binds strongly to the 16S ribosomal RNA. The polypeptide is Small ribosomal subunit protein uS19 (Desulfotalea psychrophila (strain LSv54 / DSM 12343)).